Reading from the N-terminus, the 156-residue chain is CASP-like protein 5C1 (156 aa).

Residues 1–21 (MENRERAGAGAVGSAGSLGLR) lie on the Cytoplasmic side of the membrane. Residues 22 to 42 (VGQAVFSSASLLFMSVGVEFF) form a helical membrane-spanning segment. At 43 to 46 (SYTA) the chain is on the extracellular side. The chain crosses the membrane as a helical span at residues 47–67 (FCFLVTIMGLVIPWSCTLAMI). Over 68–81 (DVYSILVGCPLRVP) the chain is Cytoplasmic. The chain crosses the membrane as a helical span at residues 82–102 (GVMVIVVIGDWVLAILSLAAA). Residues 103–132 (SSSAAVIDLLLQFHGSHCSPRFCGRYQLSA) are Extracellular-facing. The helical transmembrane segment at 133–153 (MMAFLSWFLTAASSLFNLWFI) threads the bilayer. Residues 154 to 156 (ASR) are Cytoplasmic-facing.

The protein belongs to the Casparian strip membrane proteins (CASP) family. In terms of assembly, homodimer and heterodimers.

It localises to the cell membrane. The protein is CASP-like protein 5C1 of Oryza sativa subsp. japonica (Rice).